Reading from the N-terminus, the 59-residue chain is Cortexin domain containing 2 (59 aa).

The chain crosses the membrane as a helical span at residues 20–40 (FAIAFVVLVFVFLIVMVFRCV).

The protein resides in the membrane. The protein is Cortexin domain containing 2 of Mus musculus (Mouse).